The sequence spans 901 residues: Valine--tRNA ligase (901 aa).

The 'KMSKS' region motif lies at 536–540 (KLSKS). Lysine 539 lines the ATP pocket. Residues 831 to 901 (LEGLISFEKE…KLQGNLEVLS (71 aa)) adopt a coiled-coil conformation.

It belongs to the class-I aminoacyl-tRNA synthetase family. ValS type 1 subfamily. Monomer.

The protein resides in the cytoplasm. The catalysed reaction is tRNA(Val) + L-valine + ATP = L-valyl-tRNA(Val) + AMP + diphosphate. Functionally, catalyzes the attachment of valine to tRNA(Val). As ValRS can inadvertently accommodate and process structurally similar amino acids such as threonine, to avoid such errors, it has a 'posttransfer' editing activity that hydrolyzes mischarged Thr-tRNA(Val) in a tRNA-dependent manner. The protein is Valine--tRNA ligase of Chlorobaculum tepidum (strain ATCC 49652 / DSM 12025 / NBRC 103806 / TLS) (Chlorobium tepidum).